The following is a 381-amino-acid chain: Teichoic acid glycerol-phosphate primase (381 aa).

This sequence belongs to the CDP-glycerol glycerophosphotransferase family.

Its subcellular location is the cell membrane. The enzyme catalyses N-acetyl-beta-D-mannosaminyl-(1-&gt;4)-N-acetyl-alpha-D-glucosaminyl di-trans,octa-cis-undecaprenyl diphosphate + CDP-glycerol = 4-O-[(2R)-glycerylphospho]-N-acetyl-beta-D-mannosaminyl-(1-&gt;4)-N-acetyl-alpha-D-glucosaminyl di-trans,octa-cis-undecaprenyl diphosphate + CMP + H(+). It participates in cell wall biogenesis; poly(glycerol phosphate) teichoic acid biosynthesis. In terms of biological role, catalyzes the addition of a single glycerol phosphate residue to the prenoldiphosphate-linked disaccharide, as a primer for polymerisation by TagF. The chain is Teichoic acid glycerol-phosphate primase (tagB) from Bacillus subtilis (strain 168).